Here is a 71-residue protein sequence, read N- to C-terminus: Small ribosomal subunit protein bS21 (71 aa).

This sequence belongs to the bacterial ribosomal protein bS21 family.

This is Small ribosomal subunit protein bS21 from Pseudoalteromonas atlantica (strain T6c / ATCC BAA-1087).